The chain runs to 411 residues: LL-diaminopimelate aminotransferase (411 aa).

Y16 and G43 together coordinate substrate. Pyridoxal 5'-phosphate contacts are provided by residues Y73, 109–110 (AK), Y133, N188, Y219, and 247–249 (SFS). Positions 110, 133, and 188 each coordinate substrate. At K250 the chain carries N6-(pyridoxal phosphate)lysine. Pyridoxal 5'-phosphate contacts are provided by R258 and N293. Residues N293 and R389 each contribute to the substrate site.

Belongs to the class-I pyridoxal-phosphate-dependent aminotransferase family. LL-diaminopimelate aminotransferase subfamily. In terms of assembly, homodimer. Requires pyridoxal 5'-phosphate as cofactor.

It carries out the reaction (2S,6S)-2,6-diaminopimelate + 2-oxoglutarate = (S)-2,3,4,5-tetrahydrodipicolinate + L-glutamate + H2O + H(+). The protein operates within amino-acid biosynthesis; L-lysine biosynthesis via DAP pathway; LL-2,6-diaminopimelate from (S)-tetrahydrodipicolinate (aminotransferase route): step 1/1. Functionally, involved in the synthesis of meso-diaminopimelate (m-DAP or DL-DAP), required for both lysine and peptidoglycan biosynthesis. Catalyzes the direct conversion of tetrahydrodipicolinate to LL-diaminopimelate. This Methanobrevibacter smithii (strain ATCC 35061 / DSM 861 / OCM 144 / PS) protein is LL-diaminopimelate aminotransferase.